The chain runs to 324 residues: Probable fructokinase-5 (324 aa).

It belongs to the carbohydrate kinase PfkB family.

It carries out the reaction D-fructose + ATP = D-fructose 6-phosphate + ADP + H(+). The protein operates within glycan biosynthesis; starch biosynthesis. Its function is as follows. May play an important role in maintaining the flux of carbon towards starch formation. The polypeptide is Probable fructokinase-5 (Arabidopsis thaliana (Mouse-ear cress)).